The sequence spans 912 residues: Isoleucine--tRNA ligase (912 aa).

The short motif at 57-67 (PYANGDIHLGT) is the 'HIGH' region element. Glu549 provides a ligand contact to L-isoleucyl-5'-AMP. A 'KMSKS' region motif is present at residues 590–594 (KMSKS). Lys593 provides a ligand contact to ATP. Residues Cys880, Cys883, Cys900, and Cys903 each coordinate Zn(2+).

It belongs to the class-I aminoacyl-tRNA synthetase family. IleS type 1 subfamily. As to quaternary structure, monomer. Requires Zn(2+) as cofactor.

The protein localises to the cytoplasm. The enzyme catalyses tRNA(Ile) + L-isoleucine + ATP = L-isoleucyl-tRNA(Ile) + AMP + diphosphate. Catalyzes the attachment of isoleucine to tRNA(Ile). As IleRS can inadvertently accommodate and process structurally similar amino acids such as valine, to avoid such errors it has two additional distinct tRNA(Ile)-dependent editing activities. One activity is designated as 'pretransfer' editing and involves the hydrolysis of activated Val-AMP. The other activity is designated 'posttransfer' editing and involves deacylation of mischarged Val-tRNA(Ile). In Fervidobacterium pennivorans (strain DSM 9078 / Ven5), this protein is Isoleucine--tRNA ligase.